A 59-amino-acid chain; its full sequence is uncharacterized protein (59 aa).

This is an uncharacterized protein from Chenopodium amaranticolor (Quinoa).